The sequence spans 260 residues: Archaerhodopsin-1 (260 aa).

A propeptide spanning residues 1 to 6 is cleaved from the precursor; the sequence is MDPIAL. Residues 7–20 lie on the Extracellular side of the membrane; it reads TAAVGADLLGDGRP. The chain crosses the membrane as a helical span at residues 21–42; sequence ETLWLGIGTLLMLIGTFYFIVK. Residues 43-51 lie on the Cytoplasmic side of the membrane; it reads GWGVTDKEA. The helical transmembrane segment at 52–73 threads the bilayer; the sequence is REYYSITILVPGIASAAYLSMF. At 74–91 the chain is on the extracellular side; it reads FGIGLTEVQVGSEMLDIY. The helical transmembrane segment at 92 to 113 threads the bilayer; it reads YARYADWLFTTPLLLLDLALLA. Topologically, residues 114–116 are cytoplasmic; that stretch reads KVD. The helical transmembrane segment at 117–139 threads the bilayer; that stretch reads RVSIGTLVGVDALMIVTGLVGAL. Over 140–143 the chain is Extracellular; that stretch reads SHTP. A helical membrane pass occupies residues 144–172; sequence LARYTWWLFSTICMIVVLYFLATSLRAAA. Over 173 to 176 the chain is Cytoplasmic; sequence KERG. Residues 177 to 204 traverse the membrane as a helical segment; that stretch reads PEVASTFNTLTALVLVLWTAYPILWIIG. The Extracellular segment spans residues 205 to 212; the sequence is TEGAGVVG. Residues 213 to 245 traverse the membrane as a helical segment; sequence LGIETLLFMVLDVTAKVGFGFILLRSRAILGDT. At Lys228 the chain carries N6-(retinylidene)lysine. The Cytoplasmic portion of the chain corresponds to 246 to 260; sequence EAPEPSAGAEASAAD.

Belongs to the archaeal/bacterial/fungal opsin family.

The protein resides in the cell membrane. In terms of biological role, light-driven proton pump. It may interact with bacterioruberin in the claret membrane. The chain is Archaerhodopsin-1 from Halorubrum ezzemoulense (Halorubrum chaoviator).